A 648-amino-acid chain; its full sequence is Protein associated with UVRAG as autophagy enhancer (648 aa).

Composition is skewed to polar residues over residues 131 to 146 (QESL…TSPS) and 157 to 173 (PHLT…SSSR). Positions 131-173 (QESLLKNPKTVATSPSPKEGSARSESPHLTASTDDGDARSSSR) are disordered. S144 is modified (phosphoserine). The interval 183–222 (ETFMLPADVEKENLHFYAADIIISVIENMKCNLPNQQQPE) is interaction with UVRAG. N6-acetyllysine is present on residues K469, K509, K519, K559, and K619.

In terms of assembly, interacts with UVRAG; the interaction is direct and promotes association with the PI3K/PI3KC3 and HOPS complexes. Interacts with STX17. Post-translationally, phosphorylated by MTOR at Ser-144 under nutrient-rich conditions. Phosphorylation prevents acetylation by KAT5/TIP60 and impairs RUBCNL/PACER function and autophagosome maturation. Under autophagy induction, Phosphorylation by MTOR is repressed, enabling acetylation by KAT5/TIP60. In terms of processing, acetylated by KAT5/TIP60 under autophagy induction, promoting autophagosome maturation and lipid metabolism. Acetylation is prevented by phosphorylation by MTOR. Lys-469 and Lys-559 constitute the key sites for tuning function in autophagy.

It is found in the cytoplasmic vesicle. The protein resides in the autophagosome membrane. Regulator of autophagy that promotes autophagosome maturation by facilitating the biogenesis of phosphatidylinositol 3-phosphate (PtdIns(3)P) in late steps of autophagy. Acts by antagonizing RUBCN, thereby stimulating phosphatidylinositol 3-kinase activity of the PI3K/PI3KC3 complex. Following anchorage to the autophagosomal SNARE STX17, promotes the recruitment of PI3K/PI3KC3 and HOPS complexes to the autophagosome to regulate the fusion specificity of autophagosomes with late endosomes/lysosomes. Binds phosphoinositides phosphatidylinositol 3-phosphate (PtdIns(3)P), 4-phosphate (PtdIns(4)P) and 5-phosphate (PtdIns(5)P). In addition to its role in autophagy, acts as a regulator of lipid and glycogen homeostasis. May act as a tumor suppressor. This is Protein associated with UVRAG as autophagy enhancer from Mus musculus (Mouse).